The sequence spans 215 residues: MPKGAWSTAASGTREASTPSRSSWPASPTTSPPPWSEPDAEISRRKRSSSSWPKSPIKTTQETCRRFCARPPSTTPKLILSNSLSGSSSPGPSSSRRGARFRRSTAASSRSPATSARSTSSCPRAAPTCPCPLSRRVPSPPYLRGPARVTAFRCIIQGHPRGPPPAARYRSRAAGMRPLASHRRRHQPAPGNQVSPGPSPRPDPAMRGKPAGAPA.

Disordered stretches follow at residues 1–144 and 156–215; these read MPKG…PYLR and IQGH…GAPA. Composition is skewed to low complexity over residues 16 to 29, 49 to 58, 85 to 96, and 104 to 127; these read ASTPSRSSWPASPT, SSSWPKSPIK, SGSSSPGPSSSR, and STAASSRSPATSARSTSSCPRAAP.

This is an uncharacterized protein from Homo sapiens (Human).